A 72-amino-acid polypeptide reads, in one-letter code: NAD(P)H-quinone oxidoreductase subunit O (72 aa).

Belongs to the complex I NdhO subunit family. NDH-1 can be composed of about 15 different subunits; different subcomplexes with different compositions have been identified which probably have different functions.

It is found in the cellular thylakoid membrane. It carries out the reaction a plastoquinone + NADH + (n+1) H(+)(in) = a plastoquinol + NAD(+) + n H(+)(out). The catalysed reaction is a plastoquinone + NADPH + (n+1) H(+)(in) = a plastoquinol + NADP(+) + n H(+)(out). NDH-1 shuttles electrons from an unknown electron donor, via FMN and iron-sulfur (Fe-S) centers, to quinones in the respiratory and/or the photosynthetic chain. The immediate electron acceptor for the enzyme in this species is believed to be plastoquinone. Couples the redox reaction to proton translocation, and thus conserves the redox energy in a proton gradient. Cyanobacterial NDH-1 also plays a role in inorganic carbon-concentration. This Trichodesmium erythraeum (strain IMS101) protein is NAD(P)H-quinone oxidoreductase subunit O.